The chain runs to 815 residues: (-)-kolavenyl diphosphate synthase TPS14, chloroplastic (815 aa).

A chloroplast-targeting transit peptide spans 1–51 (MFMSSSSSSHARRPQLSSFSYLHPPLPFPGLSFFNTRDKRVNFDSTRIICI). Substrate is bound at residue Lys247. Residues Asp379 and Asp381 each coordinate Mg(2+). The DXDD motif motif lies at 379–382 (DIDD). Lys465 serves as a coordination point for substrate.

Belongs to the terpene synthase family. Tpsc subfamily. Mg(2+) serves as cofactor.

It localises to the plastid. The protein resides in the chloroplast. It catalyses the reaction (2E,6E,10E)-geranylgeranyl diphosphate = (-)-kolavenyl diphosphate. Inhibited by high concentrations of magnesium. Diterpene synthase that catalyzes the formation of (-)-kolavenyl diphosphate from geranylgeranyl diphosphate (GGPP). In Tripterygium wilfordii (Thunder God vine), this protein is (-)-kolavenyl diphosphate synthase TPS14, chloroplastic.